The following is a 1087-amino-acid chain: Fanconi-associated nuclease 1 homolog (1087 aa).

Disordered regions lie at residues 1–79, 104–154, 169–202, 459–486, 816–835, and 842–871; these read MKSN…TPIK, FQKA…PNNL, EFLL…NNIT, TQNS…NNNI, ITSD…EKEN, and SVKK…EEEI. Residues 41 to 79 are compositionally biased toward low complexity; sequence TTTPPKTPTQPIRFTQNNNKENDKSNNNNNNNNTITPIK. The segment covering 104-115 has biased composition (polar residues); that stretch reads FQKASTPSSPQI. Low complexity-rich tracts occupy residues 118–154, 182–202, and 467–485; these read KLPQ…PNNL, NTTT…NNIT, and NNNN…NNNN. 2 coiled-coil regions span residues 419 to 490 and 830 to 874; these read WKSK…KEYD and KIEK…IIEI. Positions 848 to 871 are enriched in acidic residues; sequence EQEEEEEEEEEGQGQEEEEEEEEI. Residues Glu-899, Asp-1023, Glu-1051, and Val-1052 each coordinate Mn(2+). The VRR-NUC domain maps to 961 to 1083; the sequence is DDLLILLNQS…GCDVEVCLVK (123 aa).

It belongs to the FAN1 family. Requires Mn(2+) as cofactor. Mg(2+) is required as a cofactor.

The catalysed reaction is Hydrolytically removes 5'-nucleotides successively from the 3'-hydroxy termini of 3'-hydroxy-terminated oligonucleotides.. Its function is as follows. Nuclease required for the repair of DNA interstrand cross-links (ICL). Acts as a 5'-3' exonuclease that anchors at a cut end of DNA and cleaves DNA successively at every third nucleotide, allowing to excise an ICL from one strand through flanking incisions. This Dictyostelium discoideum (Social amoeba) protein is Fanconi-associated nuclease 1 homolog (mtmr15).